The sequence spans 336 residues: Phenylalanine--tRNA ligase alpha subunit (336 aa).

Glu-259 provides a ligand contact to Mg(2+).

The protein belongs to the class-II aminoacyl-tRNA synthetase family. Phe-tRNA synthetase alpha subunit type 1 subfamily. Tetramer of two alpha and two beta subunits. Mg(2+) is required as a cofactor.

Its subcellular location is the cytoplasm. The catalysed reaction is tRNA(Phe) + L-phenylalanine + ATP = L-phenylalanyl-tRNA(Phe) + AMP + diphosphate + H(+). This is Phenylalanine--tRNA ligase alpha subunit from Tropheryma whipplei (strain TW08/27) (Whipple's bacillus).